Here is a 583-residue protein sequence, read N- to C-terminus: MAASEVQGLPVDPREAGVRGVRGGIGHTDHEGHLGSFQLLATINKAAMNIVEHVSFLPVGTSSGYIAASSGITMSNFLRNRQTDFQSGCTSLQSHQQWRSVPLSPHPHQHLLSPEFLILAILTGVRWNLRIALICISLMIKDAEHFFRCFSAIWYSSDSKDCILEPLSLPESPGGTTALEGSPSVPCIFCEEHFPMAEQDKLLKHMIIEHKIVIADVKLVADFRRYILYWRKRFTEQPITDFCSVIRINSTAPFEEQDNYYLLCDALPEDRILREELQKHKLKEVLDQQQRERNDTSFHGVCMFCSEEFRGNRSVLLNHMAREHAFNIGLPDNIVNCAEFLCTLQKKLDNLQCLYCEKTFRDKNTLKDHMRKKQHRRINPKNREYDRFYVINYLELGKSWEEVQSEDDRELLDLQEDDWSDWQEYPVSAVCLFCEKQEETIDKLYVHMKDTHEFDLLRIKSELGLNFYQQVKLVNFIRRQVHQCKCYSCHVKFKSKADLRTHMEDTKHTSLLPDRKTWDQLEYYFPTYENDTLLCTLSDSESDLTAQEQTENVPVISEDTSRLCALKQSSVLNQLLLQGCLEN.

C2H2-type zinc fingers lie at residues 351–375 (LQCL…KKQH) and 482–508 (HQCK…DTKH).

It belongs to the ZNF277 family. As to quaternary structure, interacts (via zinc-finger domains) with RPS2/40S ribosomal protein S2, perhaps as nascent RPS2 is synthesized during translation; the interaction is direct; the interaction is extra-ribosomal. Interaction with RPS2 competes with the binding of RPS2 to protein arginine methyltransferase PRMT3. Interacts with Polycomb group (PcG) complex protein BMI1. May be part of a complex including at least ZNF277, BMI1 and RNF2/RING2.

Its subcellular location is the nucleus. It localises to the cytoplasm. The protein localises to the nucleolus. The protein resides in the chromosome. Its function is as follows. Probable transcription factor. Involved in modulation of cellular senescence; represses transcription of the tumor suppressor gene INK4A/ARF, perhaps acting via the Polycomb group (PcG) complex PRC1. The sequence is that of Zinc finger protein 277 from Mus musculus (Mouse).